A 109-amino-acid polypeptide reads, in one-letter code: Cell division protein ZapA (109 aa).

A coiled-coil region spans residues 21–97; sequence PEQRDALSQA…QTIEQALLDQ (77 aa).

It belongs to the ZapA family. Type 1 subfamily. As to quaternary structure, homodimer. Interacts with FtsZ.

The protein resides in the cytoplasm. In terms of biological role, activator of cell division through the inhibition of FtsZ GTPase activity, therefore promoting FtsZ assembly into bundles of protofilaments necessary for the formation of the division Z ring. It is recruited early at mid-cell but it is not essential for cell division. This is Cell division protein ZapA from Enterobacter sp. (strain 638).